A 142-amino-acid polypeptide reads, in one-letter code: Cytochrome b5-related protein (142 aa).

One can recognise a Cytochrome b5 heme-binding domain in the interval 16-100; that stretch reads PTYRNSAPVT…IAKYKVRDAY (85 aa). Heme-binding residues include His-59 and His-82.

It belongs to the cytochrome b5 family.

May play a role in muscle cell metabolism. The protein is Cytochrome b5-related protein (Cyt-b5-r) of Drosophila virilis (Fruit fly).